The sequence spans 125 residues: Succinate dehydrogenase assembly factor 3, mitochondrial (125 aa).

The N-terminal 30 residues, 1 to 30 (MPGKHVSRVRALYRRILLLHRALPPDLKAL), are a transit peptide targeting the mitochondrion.

This sequence belongs to the complex I LYR family. SDHAF3 subfamily. In terms of assembly, interacts with Sdhb within an Sdha-Sdhb subcomplex.

The protein resides in the mitochondrion matrix. Its function is as follows. Plays an essential role in the assembly of succinate dehydrogenase (SDH), an enzyme complex (also referred to as respiratory complex II) that is a component of both the tricarboxylic acid (TCA) cycle and the mitochondrial electron transport chain, and which couples the oxidation of succinate to fumarate with the reduction of ubiquinone (coenzyme Q) to ubiquinol. Promotes maturation of the iron-sulfur protein subunit Sdhb of the SDH catalytic dimer, protecting it from the deleterious effects of oxidants. May act together with SDHAF1. The polypeptide is Succinate dehydrogenase assembly factor 3, mitochondrial (Mus musculus (Mouse)).